We begin with the raw amino-acid sequence, 327 residues long: Pectate lyase A (327 aa).

Residues 1-19 form the signal peptide; the sequence is MQNLKFLIAAVSCLGPALA. N-linked (GlcNAc...) asparagine glycosylation is present at N99. Positions 140, 169, and 173 each coordinate Ca(2+). The active site involves R226.

Belongs to the polysaccharide lyase 1 family. It depends on Ca(2+) as a cofactor.

Its subcellular location is the secreted. The catalysed reaction is Eliminative cleavage of (1-&gt;4)-alpha-D-galacturonan to give oligosaccharides with 4-deoxy-alpha-D-galact-4-enuronosyl groups at their non-reducing ends.. Functionally, pectinolytic enzyme consist of four classes of enzymes: pectin lyase, polygalacturonase, pectin methylesterase and rhamnogalacturonase. Among pectinolytic enzymes, pectin lyase is the most important in depolymerization of pectin, since it cleaves internal glycosidic bonds of highly methylated pectins. Favors pectate, the anion, over pectin, the methyl ester. The chain is Pectate lyase A (plyA) from Emericella nidulans (strain FGSC A4 / ATCC 38163 / CBS 112.46 / NRRL 194 / M139) (Aspergillus nidulans).